A 356-amino-acid chain; its full sequence is Protein RecA (356 aa).

Gly-78–Thr-85 contacts ATP.

It belongs to the RecA family.

It is found in the cytoplasm. Its function is as follows. Can catalyze the hydrolysis of ATP in the presence of single-stranded DNA, the ATP-dependent uptake of single-stranded DNA by duplex DNA, and the ATP-dependent hybridization of homologous single-stranded DNAs. It interacts with LexA causing its activation and leading to its autocatalytic cleavage. The protein is Protein RecA of Paracoccus denitrificans.